Consider the following 247-residue polypeptide: Mast cell protease 8 (247 aa).

A signal peptide spans 1-19; sequence MFLLLVLLVAALPVNAEGG. Position 20 (E20) is a propeptide, activation peptide. The region spanning 21–242 is the Peptidase S1 domain; that stretch reads IIWGTESKPH…FMPWIRKTMK (222 aa). N41 carries N-linked (GlcNAc...) asparagine glycosylation. The cysteines at positions 49 and 65 are disulfide-linked. H64 acts as the Charge relay system in catalysis. N-linked (GlcNAc...) asparagine glycosylation is found at N71 and N101. Catalysis depends on D107, which acts as the Charge relay system. Disulfide bonds link C141-C206 and C171-C185. N-linked (GlcNAc...) asparagine glycosylation is found at N151 and N179. The Charge relay system role is filled by S200.

This sequence belongs to the peptidase S1 family. Granzyme subfamily.

It is found in the secreted. The protein resides in the cytoplasmic granule. The polypeptide is Mast cell protease 8 (Mcpt8) (Mus musculus (Mouse)).